We begin with the raw amino-acid sequence, 157 residues long: MSWAKQRVPFLDDDDGEEENDVQDDVDSPVPTRPLVIDEDAEPAAGTSGGLEGGGGDDEDGEDGHALPDLDDDLLLQFEPMLPRVYDLLLPSLDARLNFVNAGQKYAAFLKYVHGDCATCSHGEILREKTQLLTAIVSKLMDINGILEGKDESAPGK.

The tract at residues methionine 1 to aspartate 69 is disordered. Over residues leucine 11–aspartate 27 the composition is skewed to acidic residues.

Belongs to the herpesviridae TRM2 protein family. As to quaternary structure, associates with TRM1 and TRM3 to form the tripartite terminase complex.

The protein resides in the host nucleus. In terms of biological role, component of the molecular motor that translocates viral genomic DNA in empty capsid during DNA packaging. Forms a tripartite terminase complex together with TRM1 and TRM3 in the host cytoplasm. Once the complex reaches the host nucleus, it interacts with the capsid portal vertex. This portal forms a ring in which genomic DNA is translocated into the capsid. This chain is Tripartite terminase subunit 2, found in Homo sapiens (Human).